The primary structure comprises 339 residues: tRNA methyltransferase 10 homolog A (339 aa).

Disordered regions lie at residues M1–K90 and D282–H339. Residues N14–E35 show a composition bias toward basic and acidic residues. A coiled-coil region spans residues K52–E81. The span at R61–L74 shows a compositional bias: basic residues. The 191-residue stretch at R89–V279 folds into the SAM-dependent MTase TRM10-type domain. Positions G300 to E309 are enriched in acidic residues. The segment covering E310–T330 has biased composition (basic and acidic residues). S336 is modified (phosphoserine).

It belongs to the class IV-like SAM-binding methyltransferase superfamily. TRM10 family. As to quaternary structure, interacts with tRNA. Expressed in embryonic and fetal brain. It is expressed throughout the dorsal telencephalon at 8 and 11 weeks of gestation, with highest expression in ventricular zone and marginal zone. Detected in cerebellar cortex and nuclei, but not in dorsal telencephalon, at later stages.

The protein localises to the nucleus. The protein resides in the nucleolus. The enzyme catalyses guanosine(9) in tRNA + S-adenosyl-L-methionine = N(1)-methylguanosine(9) in tRNA + S-adenosyl-L-homocysteine + H(+). In terms of biological role, S-adenosyl-L-methionine-dependent guanine N(1)-methyltransferase that catalyzes the formation of N(1)-methylguanine at position 9 (m1G9) in tRNAs. Probably not able to catalyze formation of N(1)-methyladenine at position 9 (m1A9) in tRNAs. The polypeptide is tRNA methyltransferase 10 homolog A (TRMT10A) (Homo sapiens (Human)).